Reading from the N-terminus, the 519-residue chain is NADH-quinone oxidoreductase subunit C/D (519 aa).

The tract at residues Met-1–Gln-138 is NADH dehydrogenase I subunit C. Positions Asp-159–Arg-519 are NADH dehydrogenase I subunit D.

This sequence in the N-terminal section; belongs to the complex I 30 kDa subunit family. In the C-terminal section; belongs to the complex I 49 kDa subunit family. NDH-1 is composed of 13 different subunits. Subunits NuoB, CD, E, F, and G constitute the peripheral sector of the complex.

The protein localises to the cell inner membrane. It carries out the reaction a quinone + NADH + 5 H(+)(in) = a quinol + NAD(+) + 4 H(+)(out). Its function is as follows. NDH-1 shuttles electrons from NADH, via FMN and iron-sulfur (Fe-S) centers, to quinones in the respiratory chain. The immediate electron acceptor for the enzyme in this species is believed to be a menaquinone. Couples the redox reaction to proton translocation (for every two electrons transferred, four hydrogen ions are translocated across the cytoplasmic membrane), and thus conserves the redox energy in a proton gradient. The chain is NADH-quinone oxidoreductase subunit C/D from Phocaeicola vulgatus (strain ATCC 8482 / DSM 1447 / JCM 5826 / CCUG 4940 / NBRC 14291 / NCTC 11154) (Bacteroides vulgatus).